A 434-amino-acid polypeptide reads, in one-letter code: MTDFSPREIVSELDRFIVGQTDAKRAVSIALRNRWRRQQLEGSLREEVLPKNILMIGPTGVGKTEIARRLAKLANAPFLKVEATKFTEVGYVGRDVEQIVRDLVEVAIAQVRERKRKDVQARAQLAAEERVLDALVGANASSATRESFRKKLRAGELNDKEIEIETQSSGGGMPMFEIPGMPGAQMGAISIGDIFGKLGGRSKTRRLTVESSHEILINEESDKLLDTEQLTLEAISAVENNGIVFLDEIDKICARDGRVGGDVSREGVQRDLLPLIEGTTVSTKHGAVKTDHILFIASGAFHVAKPSDLLPELQGRLPIRVELQALTRDDMRRILTEPEASLIKQYVALMQTEGVTLDITDNAIDALADVAVAVNSTVENIGARRLQTVMERVLDEISFTAPDRNGETIRVDADFVQKHVGDLAKNADLSRFIL.

Residues V18, 60–65 (GVGKTE), D247, E312, and R384 each bind ATP.

Belongs to the ClpX chaperone family. HslU subfamily. In terms of assembly, a double ring-shaped homohexamer of HslV is capped on each side by a ring-shaped HslU homohexamer. The assembly of the HslU/HslV complex is dependent on binding of ATP.

It localises to the cytoplasm. ATPase subunit of a proteasome-like degradation complex; this subunit has chaperone activity. The binding of ATP and its subsequent hydrolysis by HslU are essential for unfolding of protein substrates subsequently hydrolyzed by HslV. HslU recognizes the N-terminal part of its protein substrates and unfolds these before they are guided to HslV for hydrolysis. This chain is ATP-dependent protease ATPase subunit HslU, found in Bradyrhizobium diazoefficiens (strain JCM 10833 / BCRC 13528 / IAM 13628 / NBRC 14792 / USDA 110).